Reading from the N-terminus, the 578-residue chain is CTP synthase (578 aa).

Positions 305 to 559 (KIALVGKYTN…LGLVAASSGI (255 aa)) constitute a Glutamine amidotransferase type-1 domain. Catalysis depends on for GATase activity residues C404, H535, and E537.

This sequence belongs to the CTP synthase family.

It carries out the reaction UTP + L-glutamine + ATP + H2O = CTP + L-glutamate + ADP + phosphate + 2 H(+). Its pathway is pyrimidine metabolism; CTP biosynthesis via de novo pathway; CTP from UDP: step 2/2. Functionally, catalyzes the ATP-dependent amination of UTP to CTP with either L-glutamine or ammonia as the source of nitrogen. This Candida glabrata (strain ATCC 2001 / BCRC 20586 / JCM 3761 / NBRC 0622 / NRRL Y-65 / CBS 138) (Yeast) protein is CTP synthase (URA7).